A 217-amino-acid polypeptide reads, in one-letter code: Glutathione S-transferase B (217 aa).

The region spanning 1-87 (PMTLGYWNIR…YIARKHNLCG (87 aa)) is the GST N-terminal domain. Residues 6–7 (YW), 45–49 (WLNEK), 58–59 (NL), and 71–72 (QS) contribute to the glutathione site. The 119-residue stretch at 89–207 (TEEETIRMDI…KSSRFLPKPL (119 aa)) folds into the GST C-terminal domain. Y115 lines the substrate pocket.

The protein belongs to the GST superfamily. Mu family. As to quaternary structure, homodimer.

It localises to the cytoplasm. It carries out the reaction RX + glutathione = an S-substituted glutathione + a halide anion + H(+). It catalyses the reaction prostaglandin A2 + glutathione = prostaglandin A2-S-(R)-glutathione. The enzyme catalyses prostaglandin J2 + glutathione = prostaglandin J2-S-(R)-glutathione. The catalysed reaction is prostaglandin J2 + glutathione = prostaglandin J2-S-(S)-glutathione. It carries out the reaction prostaglandin A2 + glutathione = prostaglandin A2-S-(S)-glutathione. It catalyses the reaction 11(S)-hydroxy-14(S),15(S)-epoxy-(5Z,8Z,12E)-eicosatrienoate + glutathione = (11S,15S)-dihydroxy-14(R)-S-glutathionyl-(5Z,8Z,12E)-eicosatrienoate. Conjugation of reduced glutathione to a wide number of exogenous and endogenous hydrophobic electrophiles. Involved in the formation of glutathione conjugates of both prostaglandin A2 (PGA2) and prostaglandin J2 (PGJ2). Participates in the formation of novel hepoxilin regioisomers. The polypeptide is Glutathione S-transferase B (GSTM1) (Cavia porcellus (Guinea pig)).